The chain runs to 409 residues: Runt-related transcription factor 3 (409 aa).

3 disordered regions span residues 1–51 (MRIP…RTRP), 177–248 (GPRE…QFDR), and 346–409 (AGGG…WRPY). Over residues 7-17 (PSTSRRFTPPS) the composition is skewed to polar residues. In terms of domain architecture, Runt spans 55-183 (SMVDVLADHA…TVDGPREPRR (129 aa)). Basic and acidic residues predominate over residues 187 to 204 (KIEDQTKAFPDRFGDLRM). K193 participates in a covalent cross-link: Glycyl lysine isopeptide (Lys-Gly) (interchain with G-Cter in SUMO2). Polar residues predominate over residues 207 to 238 (TPSTPSPRGSLSTTSHFSSQAQTPIQGSSDLN). S241 carries the phosphoserine modification. Composition is skewed to polar residues over residues 355–376 (RMLT…NPSL) and 387–396 (SHSNSPTALS). Positions 400 to 409 (RMDEAVWRPY) are enriched in basic and acidic residues.

In terms of assembly, heterodimer with CBFB. RUNX3 binds DNA as a monomer and through the Runt domain. DNA-binding is increased by heterodimerization. Interacts with TLE1 and SUV39H1. The tyrosine phosphorylated form (via runt domain) interacts with SRC (via protein kinase domain). Interacts with FYN and LCK. Interacts with FOXP3. Interacts with ZFHX3. Interacts with TBX21. In terms of processing, phosphorylated on tyrosine residues by SRC. Phosphorylated by LCK and FYN.

It is found in the nucleus. The protein resides in the cytoplasm. Functionally, forms the heterodimeric complex core-binding factor (CBF) with CBFB. RUNX members modulate the transcription of their target genes through recognizing the core consensus binding sequence 5'-TGTGGT-3', or very rarely, 5'-TGCGGT-3', within their regulatory regions via their runt domain, while CBFB is a non-DNA-binding regulatory subunit that allosterically enhances the sequence-specific DNA-binding capacity of RUNX. The heterodimers bind to the core site of a number of enhancers and promoters, including murine leukemia virus, polyomavirus enhancer, T-cell receptor enhancers, LCK, IL3 and GM-CSF promoters. May be involved in the control of cellular proliferation and/or differentiation. In association with ZFHX3, up-regulates CDKN1A promoter activity following TGF-beta stimulation. CBF complexes repress ZBTB7B transcription factor during cytotoxic (CD8+) T cell development. They bind to RUNX-binding sequence within the ZBTB7B locus acting as transcriptional silencer and allowing for cytotoxic T cell differentiation. CBF complexes binding to the transcriptional silencer is essential for recruitment of nuclear protein complexes that catalyze epigenetic modifications to establish epigenetic ZBTB7B silencing. Necessary for the development and survival of sensory neurons expressing parvalbumin. The sequence is that of Runt-related transcription factor 3 (Runx3) from Mus musculus (Mouse).